We begin with the raw amino-acid sequence, 529 residues long: Phosphoenolpyruvate carboxykinase (ATP) (529 aa).

Residue Arg-52 participates in substrate binding. 3 residues coordinate Ca(2+): Arg-130, Asn-131, and Phe-133. Residues Tyr-191 and Lys-197 each contribute to the substrate site. ATP is bound by residues Lys-197, His-216, and 232–240 (GLSGTGKTT). Residues Lys-197 and His-216 each coordinate Mn(2+). Position 253 (Asp-253) interacts with Mn(2+). A Ca(2+)-binding site is contributed by Gly-267. Residues Glu-281, Arg-319, 438 to 439 (RF), Phe-439, and Thr-444 each bind ATP. Arg-319 is a binding site for substrate.

This sequence belongs to the phosphoenolpyruvate carboxykinase (ATP) family. In terms of assembly, dimer of dimers. Mn(2+) serves as cofactor.

It is found in the cytoplasm. It carries out the reaction oxaloacetate + ATP = phosphoenolpyruvate + ADP + CO2. It functions in the pathway carbohydrate biosynthesis; gluconeogenesis. Its activity is regulated as follows. Allosterically activated by calcium. In terms of biological role, involved in gluconeogenesis. Catalyzes the conversion of oxaloacetate (OAA) to phosphoenolpyruvate (PEP) through direct phosphoryl transfer between the nucleoside triphosphate and OAA. The protein is Phosphoenolpyruvate carboxykinase (ATP) of Thermus thermophilus (strain ATCC 27634 / DSM 579 / HB8).